The primary structure comprises 121 residues: Large ribosomal subunit protein uL22 (121 aa).

The protein belongs to the universal ribosomal protein uL22 family. As to quaternary structure, part of the 50S ribosomal subunit.

Its function is as follows. This protein binds specifically to 23S rRNA; its binding is stimulated by other ribosomal proteins, e.g. L4, L17, and L20. It is important during the early stages of 50S assembly. It makes multiple contacts with different domains of the 23S rRNA in the assembled 50S subunit and ribosome. The globular domain of the protein is located near the polypeptide exit tunnel on the outside of the subunit, while an extended beta-hairpin is found that lines the wall of the exit tunnel in the center of the 70S ribosome. The sequence is that of Large ribosomal subunit protein uL22 from Synechococcus sp. (strain CC9605).